Reading from the N-terminus, the 372-residue chain is Spermidine/putrescine import ATP-binding protein PotA (372 aa).

An ABC transporter domain is found at 12–242 (IQLKGLNKSF…PTNLFVARFI (231 aa)). ATP is bound at residue 44-51 (GPSGCGKT).

Belongs to the ABC transporter superfamily. Spermidine/putrescine importer (TC 3.A.1.11.1) family. As to quaternary structure, the complex is composed of two ATP-binding proteins (PotA), two transmembrane proteins (PotB and PotC) and a solute-binding protein (PotD).

The protein localises to the cell inner membrane. It catalyses the reaction ATP + H2O + polyamine-[polyamine-binding protein]Side 1 = ADP + phosphate + polyamineSide 2 + [polyamine-binding protein]Side 1.. Its function is as follows. Part of the ABC transporter complex PotABCD involved in spermidine/putrescine import. Responsible for energy coupling to the transport system. The chain is Spermidine/putrescine import ATP-binding protein PotA from Photobacterium profundum (strain SS9).